Consider the following 173-residue polypeptide: NADH-ubiquinone oxidoreductase chain 6 (173 aa).

Helical transmembrane passes span alanine 24–valine 44, phenylalanine 47–tyrosine 67, methionine 81–phenylalanine 101, and leucine 142–threonine 162.

The protein belongs to the complex I subunit 6 family.

It localises to the mitochondrion membrane. The enzyme catalyses a ubiquinone + NADH + 5 H(+)(in) = a ubiquinol + NAD(+) + 4 H(+)(out). In terms of biological role, core subunit of the mitochondrial membrane respiratory chain NADH dehydrogenase (Complex I) that is believed to belong to the minimal assembly required for catalysis. Complex I functions in the transfer of electrons from NADH to the respiratory chain. The immediate electron acceptor for the enzyme is believed to be ubiquinone. In Aedes aegypti (Yellowfever mosquito), this protein is NADH-ubiquinone oxidoreductase chain 6.